Reading from the N-terminus, the 166-residue chain is Large ribosomal subunit protein mL49 (166 aa).

The interval 56–78 is disordered; that stretch reads RIPDPPKHEHYPTPSGWQPPRDP.

It belongs to the mitochondrion-specific ribosomal protein mL49 family. In terms of assembly, component of the mitochondrial large ribosomal subunit (mt-LSU). Mature mammalian 55S mitochondrial ribosomes consist of a small (28S) and a large (39S) subunit. The 28S small subunit contains a 12S ribosomal RNA (12S mt-rRNA) and 30 different proteins. The 39S large subunit contains a 16S rRNA (16S mt-rRNA), a copy of mitochondrial valine transfer RNA (mt-tRNA(Val)), which plays an integral structural role, and 52 different proteins. Interacts with OXA1L. In terms of tissue distribution, ubiquitous.

Its subcellular location is the mitochondrion. The sequence is that of Large ribosomal subunit protein mL49 (MRPL49) from Homo sapiens (Human).